The primary structure comprises 310 residues: Methionyl-tRNA formyltransferase (310 aa).

Residue 110 to 113 participates in (6S)-5,6,7,8-tetrahydrofolate binding; sequence SLLP.

The protein belongs to the Fmt family.

The enzyme catalyses L-methionyl-tRNA(fMet) + (6R)-10-formyltetrahydrofolate = N-formyl-L-methionyl-tRNA(fMet) + (6S)-5,6,7,8-tetrahydrofolate + H(+). Its function is as follows. Attaches a formyl group to the free amino group of methionyl-tRNA(fMet). The formyl group appears to play a dual role in the initiator identity of N-formylmethionyl-tRNA by promoting its recognition by IF2 and preventing the misappropriation of this tRNA by the elongation apparatus. This Streptomyces griseus subsp. griseus (strain JCM 4626 / CBS 651.72 / NBRC 13350 / KCC S-0626 / ISP 5235) protein is Methionyl-tRNA formyltransferase.